The following is a 512-amino-acid chain: MARAVHRSGLVALGIVTALMASCAFAAKDVVVAVGSNFTTLDPYDANDTLSQAVAKSFYQGLFGLDKEMKLKNVLAESYTVSDDGITYTVKLREGIKFQDGTDFNAAAVKANLDRASDPANHLKRYNLYKNIAKTEAIDPTTVKITLKQPFSAFINILAHPATAMISPAALEKYGKEIGFHPVGTGPYELDTWNQTDFVKVKKFAGYWQPGLPKLDSITWRPVADNNTRAAMLQTGEAQFAFPIPYEQAALLEKNKNIELMASPSIMQRYISMNVTQKPFDNPKVREALNYAINRPALVKVAFAGYATPATGVVPPSIAYAQSYKPWPYDPVKARELLKEAGYPNGFSTTLWSSHNHSTAQKVLQFTQQQLAQVGIKAQVTAMDAGQRAAEVEGKGQKESGVRMFYTGWSASTGEADWALSPLFASQNWPPTLFNTAFYSNKQVDDFLAQALKTNDPAEKTSLYKAAQDIIWQESPWIPLVVEKLVSAHSKNLTGFWIMPDTGFSFEDADLQ.

Positions 1–26 are cleaved as a signal peptide; it reads MARAVHRSGLVALGIVTALMASCAFA.

The protein belongs to the bacterial solute-binding protein 5 family. In terms of assembly, the complex is composed of two ATP-binding proteins (GsiA), two transmembrane proteins (GsiC and GsiD) and a solute-binding protein (GsiB).

The protein localises to the periplasm. Part of the ABC transporter complex GsiABCD involved in glutathione import. Binds glutathione. This is Glutathione-binding protein GsiB from Shigella dysenteriae serotype 1 (strain Sd197).